A 77-amino-acid polypeptide reads, in one-letter code: U14-theraphotoxin-Cg1c (77 aa).

A signal peptide spans 1 to 21 (MNTSDPPAVLRIAAITLLCTA). The propeptide occupies 22 to 49 (SESVEQNPLIPFENAVLGSYAKMASEKR). Disulfide bonds link C50/C64 and C57/C69.

Belongs to the neurotoxin 10 (Hwtx-1) family. 65 (Jztx-21) subfamily. Expressed by the venom gland.

The protein localises to the secreted. Its function is as follows. Probable ion channel inhibitor. The polypeptide is U14-theraphotoxin-Cg1c (Chilobrachys guangxiensis (Chinese earth tiger tarantula)).